We begin with the raw amino-acid sequence, 538 residues long: Syncytin-2 (538 aa).

An N-terminal signal peptide occupies residues 1-15 (MGLLLLVLILTPSLA). Over 16–478 (AYRHPDFPLL…GWLNWEGTWK (463 aa)) the chain is Extracellular. Positions 43–46 (CWLC) match the CXXC motif. Cystine bridges form between cysteine 43-cysteine 46, cysteine 43-cysteine 439, and cysteine 431-cysteine 438. Residues asparagine 133, asparagine 146, asparagine 177, asparagine 220, asparagine 241, asparagine 247, asparagine 312, and asparagine 332 are each glycosylated (N-linked (GlcNAc...) asparagine). The interval 354–374 (FIPLLAGLGILAGTGTGIAGI) is fusion peptide. The CKS-17 motif lies at 414 to 430 (LQNRRGLDMLTAAQGGI). The CX6CC motif lies at 431-439 (CLALDEKCC). An N-linked (GlcNAc...) asparagine glycan is attached at asparagine 443. Residues 479–499 (WFSWVLPLTGPLVSLLLLLLF) form a helical membrane-spanning segment. The Cytoplasmic portion of the chain corresponds to 500-538 (GPCLLNLITQFVSSRLQAIKLQTNLSAGRHPRNIQESPF).

This sequence belongs to the gamma type-C retroviral envelope protein family. HERV class-I FRD env subfamily. As to quaternary structure, the surface and transmembrane proteins form a heterodimer. They are attached by non-covalent interactions or by a labile interchain disulfide bond. Interacts with MFSD2A. Specific enzymatic cleavages in vivo yield the mature SU and TM proteins. Post-translationally, the CXXC motif is highly conserved across a broad range of retroviral envelope proteins. It is thought to participate in the formation of a labile disulfide bond possibly with the CX6CC motif present in the transmembrane protein. Isomerization of the intersubunit disulfide bond to an SU intrachain disulfide bond is thought to occur upon receptor recognition in order to allow membrane fusion. Expressed at higher level in placenta. Expressed at lower level in adrenal, bone marrow, brain, breast, colon, kidney, lung, ovary, peripheral blood lymphocytes, prostate, skin, spleen, testis, thymus, thyroid, trachea.

The protein resides in the virion. It is found in the cell membrane. In terms of biological role, this endogenous retroviral envelope protein has retained its original fusogenic properties and participates in trophoblast fusion and the formation of a syncytium during placenta morphogenesis. The interaction with MFSD2A is apparently important for this process. Its function is as follows. Endogenous envelope proteins may have kept, lost or modified their original function during evolution but this one can still make pseudotypes with MLV, HIV-1 or SIV-1 virions and confer infectivity. Retroviral envelope proteins mediate receptor recognition and membrane fusion during early infection. The surface protein mediates receptor recognition, while the transmembrane protein anchors the envelope heterodimer to the viral membrane through one transmembrane domain. The other hydrophobic domain, called fusion peptide, mediates fusion of the viral membrane with the target cell membrane. The polypeptide is Syncytin-2 (ERVFRD-1) (Homo sapiens (Human)).